The primary structure comprises 502 residues: MPLLSSSKLSMESRKEDSEGTAPAPPQKKLSCQCHHHCPEDSVNSTCSTDGYCFTIIEEDDSGGHLVTKGCLGLEGSDFQCRDTPIPHQRRSIECCTGQDYCNKHLHPTLPPLKNRDFAEGNIHHKALLISVTVCSILLVLIIIFCYFRYKRQEARPRYSIGLEQDETYIPPGESLKDLIEQSQSSGSGSGLPLLVQRTIAKQIQMVKQIGKGRYGEVWMGKWRGEKVAVKVFFTTEEASWFRETEIYQTVLMRHENILGFIAADIKGTGSWTQLYLITDYHENGSLYDYLKSTTLDTKGMLKLAYSSVSGLCHLHTGIFSTQGKPAIAHRDLKSKNILVKKNGTCCIADLGLAVKFISDTNEVDIPPNTRVGTKRYMPPEVLDESLNRNHFQSYIMADMYSFGLILWEIARRCVSGGIVEEYQLPYHDLVPSDPSYEDMREIVCIKRLRPSFPNRWSSDECLRQMGKLMMECWAHNPASRLTALRVKKTLAKMSESQDIKL.

The segment covering 1-10 (MPLLSSSKLS) has biased composition (polar residues). Positions 1–13 (MPLLSSSKLSMES) are cleaved as a signal peptide. The interval 1-27 (MPLLSSSKLSMESRKEDSEGTAPAPPQ) is disordered. Residues 14–126 (RKEDSEGTAP…DFAEGNIHHK (113 aa)) are Extracellular-facing. 5 cysteine pairs are disulfide-bonded: cysteine 32–cysteine 53, cysteine 34–cysteine 38, cysteine 47–cysteine 71, cysteine 81–cysteine 95, and cysteine 96–cysteine 102. Asparagine 44 is a glycosylation site (N-linked (GlcNAc...) asparagine). Residues 127-148 (ALLISVTVCSILLVLIIIFCYF) form a helical membrane-spanning segment. The Cytoplasmic portion of the chain corresponds to 149–502 (RYKRQEARPR…KMSESQDIKL (354 aa)). Residues 174–203 (ESLKDLIEQSQSSGSGSGLPLLVQRTIAKQ) form the GS domain. In terms of domain architecture, Protein kinase spans 204–494 (IQMVKQIGKG…LRVKKTLAKM (291 aa)). ATP is bound by residues 210-218 (IGKGRYGEV) and lysine 231. Aspartate 332 acts as the Proton acceptor in catalysis.

The protein belongs to the protein kinase superfamily. TKL Ser/Thr protein kinase family. TGFB receptor subfamily. The cofactor is Mg(2+). Requires Mn(2+) as cofactor. In terms of processing, autophosphorylated.

The protein localises to the cell membrane. The enzyme catalyses L-threonyl-[receptor-protein] + ATP = O-phospho-L-threonyl-[receptor-protein] + ADP + H(+). It carries out the reaction L-seryl-[receptor-protein] + ATP = O-phospho-L-seryl-[receptor-protein] + ADP + H(+). Its function is as follows. On ligand binding, forms a receptor complex consisting of two type II and two type I transmembrane serine/threonine kinases. Type II receptors phosphorylate and activate type I receptors which autophosphorylate, then bind and activate SMAD transcription. Positively regulates chondrocyte differentiation. In Gallus gallus (Chicken), this protein is Bone morphogenetic protein receptor type-1B (BMPR1B).